We begin with the raw amino-acid sequence, 159 residues long: MRESVINVLFYLFDDILTEQDGQEADLNQMAHWLSEAGFAHEDVGRAMDWFCELGKIGDYQPIIQTNPAVRIFSPQEAYFIDEEGQDFLRGLCRAGVLDTQLQETVIERAIALEEPLSLETLHWVVMMVIMNTGASETVWERKWSQIWLVDDDDHSVMQ.

It belongs to the Smg family.

This chain is Protein Smg homolog, found in Dichelobacter nodosus (strain VCS1703A).